The chain runs to 297 residues: tRNA (guanine-N(7)-)-methyltransferase (297 aa).

S-adenosyl-L-methionine-binding residues include Glu-22, Glu-47, Asp-74, and Asp-97. Asp-97 is an active-site residue. Residues Lys-101, Asp-133, and 165-168 (TKYE) contribute to the substrate site.

It belongs to the class I-like SAM-binding methyltransferase superfamily. TrmB family.

The enzyme catalyses guanosine(46) in tRNA + S-adenosyl-L-methionine = N(7)-methylguanosine(46) in tRNA + S-adenosyl-L-homocysteine. Its pathway is tRNA modification; N(7)-methylguanine-tRNA biosynthesis. In terms of biological role, catalyzes the formation of N(7)-methylguanine at position 46 (m7G46) in tRNA. The chain is tRNA (guanine-N(7)-)-methyltransferase from Aquifex aeolicus (strain VF5).